A 368-amino-acid polypeptide reads, in one-letter code: tRNA-specific 2-thiouridylase MnmA (368 aa).

Residues Gly-11–Ser-18 and Met-37 each bind ATP. The interaction with target base in tRNA stretch occupies residues Asn-97 to Asp-99. Cys-102 functions as the Nucleophile in the catalytic mechanism. Cysteines 102 and 199 form a disulfide. Position 127 (Gly-127) interacts with ATP. The tract at residues Lys-149–Gln-151 is interaction with tRNA. The active-site Cysteine persulfide intermediate is the Cys-199. Residues Arg-311 to Tyr-312 are interaction with tRNA.

Belongs to the MnmA/TRMU family.

It localises to the cytoplasm. It catalyses the reaction S-sulfanyl-L-cysteinyl-[protein] + uridine(34) in tRNA + AH2 + ATP = 2-thiouridine(34) in tRNA + L-cysteinyl-[protein] + A + AMP + diphosphate + H(+). Its function is as follows. Catalyzes the 2-thiolation of uridine at the wobble position (U34) of tRNA, leading to the formation of s(2)U34. This Baumannia cicadellinicola subsp. Homalodisca coagulata protein is tRNA-specific 2-thiouridylase MnmA.